We begin with the raw amino-acid sequence, 720 residues long: Collectin-12 (720 aa).

Topologically, residues 1–37 are cytoplasmic; it reads MKDDFNDEEEVQSFGYKRFGIQEGNECTKCKNDWALR. The chain crosses the membrane as a helical; Signal-anchor for type II membrane protein span at residues 38 to 58; it reads VAIALLYVLCALLTIAVAVLG. Residues 59-720 lie on the Extracellular side of the membrane; the sequence is YKVVQRMDNV…RTNESKVPVL (662 aa). Coiled coils occupy residues 95–120, 216–267, and 377–408; these read EKSENATSELHSFKLEFQTLQKQLSD, ISSL…LAAN, and LHGLNNSVAETRAESTELKAQQEELAVRLDKE. Residues 433 to 576 are disordered; the sequence is FTILQGPPGP…GPPGLPGLPA (144 aa). 2 consecutive Collagen-like domains span residues 444 to 503 and 510 to 569; these read GPRG…PGPK and GRQG…PGPP. The span at 460-479 shows a compositional bias: basic and acidic residues; the sequence is PKGEKGEKGAPGDAGPKGEK. Low complexity predominate over residues 488 to 503; that stretch reads PGLKGPPGSRGSPGPK. Positions 504–513 are enriched in gly residues; the sequence is GSRGSGGRQG. Over residues 527–560 the composition is skewed to low complexity; the sequence is PGRDGQPGPTGPQGPQGLRGPAGPAGLEGARGPV. Residues 562-576 are compositionally biased toward pro residues; sequence PIGPPGPPGLPGLPA. Disulfide bonds link Cys604–Cys615, Cys634–Cys709, and Cys687–Cys701. The C-type lectin domain occupies 611–710; that stretch reads FREQCYHFSA…CTERIGFICE (100 aa). Ca(2+) is bound by residues Ile643, Asn645, and Glu649. A carbohydrate-binding residues include Lys670, Gln673, and Asp675. The Ca(2+) site is built by Gln673, Asp675, Asn676, Glu685, Asp686, Asn697, Asp698, and Glu710. Glu685 is a binding site for a carbohydrate. Positions 697 and 698 each coordinate a carbohydrate.

It localises to the membrane. Its function is as follows. Scavenger receptor that displays several functions associated with host defense. Binds to carbohydrates. The polypeptide is Collectin-12 (colec12) (Danio rerio (Zebrafish)).